Reading from the N-terminus, the 412-residue chain is Translation initiation factor 2 subunit gamma (412 aa).

The tr-type G domain maps to 7-203; sequence QPEVNIGLVG…AIESEIPTPD (197 aa). A G1 region spans residues 16–23; the sequence is GHVDHGKT. D19, T23, G44, and S46 together coordinate Mg(2+). 19–24 is a GTP binding site; the sequence is DHGKTT. The interval 44-48 is G2; sequence GISIR. The interval 90–93 is G3; that stretch reads DAPG. Residues 146-149 and 181-183 contribute to the GTP site; these read NKVD and SAQ. Positions 146–149 are G4; sequence NKVD. A G5 region spans residues 181–183; that stretch reads SAQ.

This sequence belongs to the TRAFAC class translation factor GTPase superfamily. Classic translation factor GTPase family. EIF2G subfamily. As to quaternary structure, heterotrimer composed of an alpha, a beta and a gamma chain. Mg(2+) serves as cofactor.

It carries out the reaction GTP + H2O = GDP + phosphate + H(+). EIF-2 functions in the early steps of protein synthesis by forming a ternary complex with GTP and initiator tRNA. The sequence is that of Translation initiation factor 2 subunit gamma from Halorubrum lacusprofundi (strain ATCC 49239 / DSM 5036 / JCM 8891 / ACAM 34).